The following is a 97-amino-acid chain: uncharacterized protein (97 aa).

Disordered stretches follow at residues 1-20 (MTEG…IASD) and 52-97 (VPAA…GRRA).

This is an uncharacterized protein from Paracoccus pantotrophus (Thiosphaera pantotropha).